The primary structure comprises 273 residues: Type III pantothenate kinase (273 aa).

ATP is bound at residue Asp-5–Val-12. Residue Gly-112–Leu-115 coordinates substrate. Asp-114 acts as the Proton acceptor in catalysis. Asp-134 contributes to the K(+) binding site. Residue Thr-137 participates in ATP binding. Thr-189 is a substrate binding site.

This sequence belongs to the type III pantothenate kinase family. In terms of assembly, homodimer. Requires NH4(+) as cofactor. K(+) is required as a cofactor.

It is found in the cytoplasm. It catalyses the reaction (R)-pantothenate + ATP = (R)-4'-phosphopantothenate + ADP + H(+). It functions in the pathway cofactor biosynthesis; coenzyme A biosynthesis; CoA from (R)-pantothenate: step 1/5. Functionally, catalyzes the phosphorylation of pantothenate (Pan), the first step in CoA biosynthesis. The polypeptide is Type III pantothenate kinase (Treponema pallidum (strain Nichols)).